We begin with the raw amino-acid sequence, 81 residues long: Large ribosomal subunit protein bL31B (81 aa).

This sequence belongs to the bacterial ribosomal protein bL31 family. Type B subfamily. As to quaternary structure, part of the 50S ribosomal subunit.

This Borreliella burgdorferi (strain ATCC 35210 / DSM 4680 / CIP 102532 / B31) (Borrelia burgdorferi) protein is Large ribosomal subunit protein bL31B.